The sequence spans 403 residues: Argininosuccinate synthase (403 aa).

ATP contacts are provided by residues 10 to 18 and Ala37; that span reads AYSGGLDTS. Tyr88 and Ser93 together coordinate L-citrulline. Residue Gly118 coordinates ATP. The L-aspartate site is built by Thr120, Asn124, and Asp125. Position 124 (Asn124) interacts with L-citrulline. Residues Arg128, Ser178, Ser187, Glu263, and Tyr275 each contribute to the L-citrulline site.

The protein belongs to the argininosuccinate synthase family. Type 1 subfamily. As to quaternary structure, homotetramer.

The protein localises to the cytoplasm. The enzyme catalyses L-citrulline + L-aspartate + ATP = 2-(N(omega)-L-arginino)succinate + AMP + diphosphate + H(+). Its pathway is amino-acid biosynthesis; L-arginine biosynthesis; L-arginine from L-ornithine and carbamoyl phosphate: step 2/3. The chain is Argininosuccinate synthase from Marinobacter nauticus (strain ATCC 700491 / DSM 11845 / VT8) (Marinobacter aquaeolei).